The sequence spans 136 residues: MQGARSAAAMAAAAADEEREVRRAVEEKPVVVVGRRGCCMAHVARRLLLGQGANPAVLEVGDDADPAALVDAALQARRRKDGGDKAAAGDGGGGAAVAFPAVFIGGRLVGGLDRLMAMHMAGELVPVLKQAGALWL.

The region spanning 18–135 (EREVRRAVEE…PVLKQAGALW (118 aa)) is the Glutaredoxin domain. Residue Cys-38 coordinates [2Fe-2S] cluster. The Responsive for interaction with TGA factors signature appears at 133-136 (ALWL).

It belongs to the glutaredoxin family. CC-type subfamily.

The protein localises to the cytoplasm. It is found in the nucleus. Its function is as follows. May only reduce GSH-thiol disulfides, but not protein disulfides. In Oryza sativa subsp. japonica (Rice), this protein is Monothiol glutaredoxin-S3 (GRXS3).